A 245-amino-acid polypeptide reads, in one-letter code: 5-oxoprolinase subunit A (245 aa).

It belongs to the LamB/PxpA family. As to quaternary structure, forms a complex composed of PxpA, PxpB and PxpC.

It carries out the reaction 5-oxo-L-proline + ATP + 2 H2O = L-glutamate + ADP + phosphate + H(+). In terms of biological role, catalyzes the cleavage of 5-oxoproline to form L-glutamate coupled to the hydrolysis of ATP to ADP and inorganic phosphate. The chain is 5-oxoprolinase subunit A from Cronobacter sakazakii (strain ATCC BAA-894) (Enterobacter sakazakii).